A 409-amino-acid chain; its full sequence is 5-aminolevulinate synthase (409 aa).

Residues Arg21 and Ser136 each coordinate substrate. Ser188, His216, and Thr244 together coordinate pyridoxal 5'-phosphate. Lys247 is an active-site residue. Lys247 is subject to N6-(pyridoxal phosphate)lysine. 2 residues coordinate pyridoxal 5'-phosphate: Thr276 and Thr277. Thr362 contributes to the substrate binding site.

This sequence belongs to the class-II pyridoxal-phosphate-dependent aminotransferase family. In terms of assembly, homodimer. Pyridoxal 5'-phosphate serves as cofactor.

The enzyme catalyses succinyl-CoA + glycine + H(+) = 5-aminolevulinate + CO2 + CoA. It participates in porphyrin-containing compound metabolism; protoporphyrin-IX biosynthesis; 5-aminolevulinate from glycine: step 1/1. This is 5-aminolevulinate synthase (hemA) from Bradyrhizobium diazoefficiens (strain JCM 10833 / BCRC 13528 / IAM 13628 / NBRC 14792 / USDA 110).